The primary structure comprises 443 residues: Putative phosphoribosyl transferase MT0597 (443 aa).

This sequence in the N-terminal section; belongs to the purine/pyrimidine phosphoribosyltransferase family. It in the C-terminal section; belongs to the dienelactone hydrolase family.

The polypeptide is Putative phosphoribosyl transferase MT0597 (Mycobacterium tuberculosis (strain CDC 1551 / Oshkosh)).